Here is a 217-residue protein sequence, read N- to C-terminus: TLD domain-containing protein 2 (217 aa).

The interval 1–48 (MKSLRWRYTRLPSQVEDALSGEEDKEEEEEKEEETTPAPTPVPEHPMV) is disordered. Residues 19–35 (LSGEEDKEEEEEKEEET) show a composition bias toward acidic residues. Residues 56-217 (QVLGASEMSQ…ISELEAWVLS (162 aa)) form the TLDc domain.

This sequence belongs to the OXR1 family.

The chain is TLD domain-containing protein 2 (TLDC2) from Bos taurus (Bovine).